A 66-amino-acid chain; its full sequence is MKASDVRALTADQLKEELAKLKKEQFNLRFQKATGQLEKSSRINEVRKDIARVKTIARQKAAEVKA.

The protein belongs to the universal ribosomal protein uL29 family.

The sequence is that of Large ribosomal subunit protein uL29 from Rhizobium etli (strain ATCC 51251 / DSM 11541 / JCM 21823 / NBRC 15573 / CFN 42).